A 692-amino-acid chain; its full sequence is Tripartite terminase subunit 1 (692 aa).

The C3H1-type zinc-finger motif lies at 190–218 (CYLCYEELQMTPNNGSSVQKRLNGVLCEH). 634–641 (YNELYGQR) is a binding site for ATP.

Belongs to the herpesviridae TRM1 protein family. Associates with TRM2 and TRM3 to form the tripartite terminase complex. Interacts with portal protein.

The protein resides in the host nucleus. Its function is as follows. Component of the molecular motor that translocates viral genomic DNA in empty capsid during DNA packaging. Forms a tripartite terminase complex together with TRM2 and TRM3 in the host cytoplasm. Once the complex reaches the host nucleus, it interacts with the capsid portal vertex. This portal forms a ring in which genomic DNA is translocated into the capsid. TRM1 carries an endonuclease activity that plays an important role for the cleavage of concatemeric viral DNA into unit length genomes. The chain is Tripartite terminase subunit 1 from Elephas maximus (Indian elephant).